Consider the following 253-residue polypeptide: Ubiquinone biosynthesis O-methyltransferase (253 aa).

R41, G72, D93, and M136 together coordinate S-adenosyl-L-methionine.

Belongs to the methyltransferase superfamily. UbiG/COQ3 family.

The enzyme catalyses a 3-demethylubiquinol + S-adenosyl-L-methionine = a ubiquinol + S-adenosyl-L-homocysteine + H(+). It carries out the reaction a 3-(all-trans-polyprenyl)benzene-1,2-diol + S-adenosyl-L-methionine = a 2-methoxy-6-(all-trans-polyprenyl)phenol + S-adenosyl-L-homocysteine + H(+). It participates in cofactor biosynthesis; ubiquinone biosynthesis. Its function is as follows. O-methyltransferase that catalyzes the 2 O-methylation steps in the ubiquinone biosynthetic pathway. The protein is Ubiquinone biosynthesis O-methyltransferase of Chelativorans sp. (strain BNC1).